Here is a 460-residue protein sequence, read N- to C-terminus: Vitamin K-dependent protein C (460 aa).

The signal sequence occupies residues 1–18 (MWQFRVFLLLMSTWGISS). A propeptide spanning residues 19 to 41 (IPAHPDPVFSSSEHAHQVLRVRR) is cleaved from the precursor. The region spanning 42 to 87 (ANSFLEEMRPGSLERECMEEICDFEEAQEIFQNVEDTLAFWIKYFD) is the Gla domain. A 4-carboxyglutamate mark is found at E47, E48, E55, E57, E60, E61, E66, E67, E70, and E76. C58 and C63 are oxidised to a cystine. 9 cysteine pairs are disulfide-bonded: C91-C110, C100-C105, C104-C119, C121-C130, C139-C150, C146-C159, C161-C174, C182-C319, and C238-C254. EGF-like domains are found at residues 96–131 (LDHQ…KFCQ) and 135–175 (RFQD…MRCK). D112 bears the (3R)-3-hydroxyaspartate mark. The Peptidase S1 domain occupies 213–449 (VNGTLTKQGD…YLKWIHSYIG (237 aa)). N-linked (GlcNAc...) asparagine glycosylation occurs at N214. The active-site Charge relay system is the H253. A glycan (N-linked (GlcNAc...) asparagine) is linked at N290. Catalysis depends on D299, which acts as the Charge relay system. N354 carries an N-linked (GlcNAc...) asparagine glycan. 2 cysteine pairs are disulfide-bonded: C372–C386 and C397–C425. S401 serves as the catalytic Charge relay system.

This sequence belongs to the peptidase S1 family. As to quaternary structure, synthesized as a single chain precursor, which is cleaved into a light chain and a heavy chain held together by a disulfide bond. The enzyme is then activated by thrombin, which cleaves a tetradecapeptide from the amino end of the heavy chain; this reaction, which occurs at the surface of endothelial cells, is strongly promoted by thrombomodulin. The vitamin K-dependent, enzymatic carboxylation of some Glu residues allows the modified protein to bind calcium. Post-translationally, the iron and 2-oxoglutarate dependent 3-hydroxylation of aspartate and asparagine is (R) stereospecific within EGF domains. As to expression, plasma; synthesized in the liver.

It is found in the secreted. Its subcellular location is the golgi apparatus. It localises to the endoplasmic reticulum. The catalysed reaction is Degradation of blood coagulation factors Va and VIIIa.. Protein C is a vitamin K-dependent serine protease that regulates blood coagulation by inactivating factors Va and VIIIa in the presence of calcium ions and phospholipids. Exerts a protective effect on the endothelial cell barrier function. This is Vitamin K-dependent protein C (Proc) from Mus musculus (Mouse).